Here is a 312-residue protein sequence, read N- to C-terminus: Nucleosome assembly protein 1-like 4 (312 aa).

Residues 24–78 are a coiled coil; sequence VETLKNKLQALAEQHVDVLESLAPSVRKRVDVLMEIQSQHDELEVKFFEEKAALE. A Nuclear export signal motif is present at residues 45–60; sequence LAPSVRKRVDVLMEIQ. A disordered region spans residues 288-312; sequence EDYGASWVDDEEEDDNDDEYSDEEA.

This sequence belongs to the nucleosome assembly protein (NAP) family.

The protein resides in the nucleus. It is found in the cytoplasm. In terms of biological role, may modulate chromatin structure by regulation of nucleosome assembly/disassembly. The sequence is that of Nucleosome assembly protein 1-like 4 from Oryza sativa subsp. indica (Rice).